Consider the following 278-residue polypeptide: Elongation factor Ts (278 aa).

An involved in Mg(2+) ion dislocation from EF-Tu region spans residues 81–84 (TDFV).

Belongs to the EF-Ts family.

It localises to the cytoplasm. Functionally, associates with the EF-Tu.GDP complex and induces the exchange of GDP to GTP. It remains bound to the aminoacyl-tRNA.EF-Tu.GTP complex up to the GTP hydrolysis stage on the ribosome. The chain is Elongation factor Ts from Thermobifida fusca (strain YX).